The chain runs to 365 residues: MNTLGRFLRLTTFGESHGDVIGGVLDGMPSGIKIDYALLENEMKRRQGGRNVFTTPRKEDDKVEITSGVFEDFSTGTPIGFLIHNQRARSKDYDNIKNLFRPSHADFTYFHKYGIRDFRGGGRSSARESAIRVAAGAFAKMLLKEIGIVCESGIIKIGGIEAKNYDFNHALKSEIFALDEEQEEAQKTAIQNAIKNHDSIGGVALIRARSIKTNQKLPIGLGQGLYAKLDAKIAEAMMGLNGVKAVEIGKGVESSLLKGSEYNDLMNQKGFLSNHSGGVLGGMSNGEEIIVKAHFKPTPSIFQPQQTIDINNNECECLLKGRHDPCIAIRGSVVCESLLSLVLADMVLLNLTSKIEYLKTIYNEN.

Arginine 46 is an NADP(+) binding site. FMN contacts are provided by residues 123 to 125, 241 to 242, glycine 281, 296 to 300, and arginine 322; these read RSS, NG, and KPTPS.

It belongs to the chorismate synthase family. As to quaternary structure, homotetramer. FMNH2 serves as cofactor.

It catalyses the reaction 5-O-(1-carboxyvinyl)-3-phosphoshikimate = chorismate + phosphate. It participates in metabolic intermediate biosynthesis; chorismate biosynthesis; chorismate from D-erythrose 4-phosphate and phosphoenolpyruvate: step 7/7. Its function is as follows. Catalyzes the anti-1,4-elimination of the C-3 phosphate and the C-6 proR hydrogen from 5-enolpyruvylshikimate-3-phosphate (EPSP) to yield chorismate, which is the branch point compound that serves as the starting substrate for the three terminal pathways of aromatic amino acid biosynthesis. This reaction introduces a second double bond into the aromatic ring system. The polypeptide is Chorismate synthase (Helicobacter pylori (strain G27)).